The primary structure comprises 629 residues: Ras GTPase-activating protein gap-1 (629 aa).

Residues 183–398 enclose the Ras-GAP domain; sequence DRIRPVLSSL…SVMASFLDNI (216 aa). The PH domain occupies 411 to 507; that stretch reads TVFKFGNLQQ…WLNAIERQRN (97 aa).

The protein resides in the cytoplasm. In terms of biological role, GTPase-activating protein, which inhibits the vulval induction by acting as a negative regulator for the member of the Ras family let-60. Probably decreases the signaling activity of Ras by stimulating its intrinsic GTPase activity, thereby lowering the levels of GTP-bound, active Ras. The polypeptide is Ras GTPase-activating protein gap-1 (gap-1) (Caenorhabditis elegans).